The primary structure comprises 401 residues: Mu-type opioid receptor (401 aa).

The Extracellular portion of the chain corresponds to 1 to 69 (MDSGAVPTNA…CPSAGSPSMI (69 aa)). N-linked (GlcNAc...) asparagine glycans are attached at residues N9, N12, N34, N41, and N49. The chain crosses the membrane as a helical span at residues 70–94 (TAIIIMALYSIVCVVGLFGNFLVMY). Topologically, residues 95–107 (VIVRYTKMKTATN) are cytoplasmic. A helical membrane pass occupies residues 108–132 (IYIFNLALADALATSTLPFQSVNYL). Topologically, residues 133–143 (MGTWPFGTILC) are extracellular. Cysteines 143 and 220 form a disulfide. A helical transmembrane segment spans residues 144-166 (KIVISIDYYNMFTSIFTLCTMSV). Residues 167 to 186 (DRYIAVCHPVKALDLRTPRN) are Cytoplasmic-facing. Phosphotyrosine is present on Y169. Residues 187–208 (AKIINICNWILSSAIGLPVMFM) traverse the membrane as a helical segment. Residues 209–231 (ATTKYRQGSIDCTLTFSHPTWYW) are Extracellular-facing. The chain crosses the membrane as a helical span at residues 232–256 (ENLLKICVFIFAFIMPILIITVCYG). At 257–280 (LMILRLKSVRMLSGSKEKDRNLRR) the chain is on the cytoplasmic side. A helical membrane pass occupies residues 281-307 (ITRMVLVVVAVFIVCWTPIHIYVIIKA). The Extracellular portion of the chain corresponds to 308–315 (LITIPETT). A helical transmembrane segment spans residues 316-339 (FQTVSWHFCIALGYTNSCLNPVLY). The NPxxY; plays a role in stabilizing the activated conformation of the receptor motif lies at 335–339 (NPVLY). The Cytoplasmic segment spans residues 340 to 401 (AFLDENFKRC…NLEAETTPLP (62 aa)). A lipid anchor (S-palmitoyl cysteine) is attached at C354. Residues 365–389 (NSTRIRQNTRDHPSTANTVDRTNHQ) are disordered. At S366 the chain carries Phosphoserine. Position 373 is a phosphothreonine (T373). The residue at position 378 (S378) is a Phosphoserine. T397 is subject to Phosphothreonine.

It belongs to the G-protein coupled receptor 1 family. As to quaternary structure, forms homooligomers and heterooligomers with other GPCRs, such as OPRD1, OPRK1, OPRL1, NPFFR2, ADRA2A, SSTR2, CNR1 and CCR5 (probably in dimeric forms). Interacts with heterotrimeric G proteins; interaction with a heterotrimeric complex containing GNAI1, GNB1 and GNG2 stabilizes the active conformation of the receptor and increases its affinity for endomorphin-2, the synthetic opioid peptide DAMGO and for morphinan agonists. Interacts with PPL; the interaction disrupts agonist-mediated G-protein activation. Interacts (via C-terminus) with DNAJB4 (via C-terminus). Interacts with calmodulin; the interaction inhibits the constitutive activity of OPRM1; it abolishes basal and attenuates agonist-stimulated G-protein coupling. Interacts with FLNA, PLD2, RANBP9 and WLS and GPM6A. Interacts with RTP4. Interacts with SYP and GNAS. Interacts with RGS9, RGS17, RGS20, RGS4, PPP1R9B and HINT1. Post-translationally, phosphorylated. Differentially phosphorylated in basal and agonist-induced conditions. Agonist-mediated phosphorylation modulates receptor internalization. Phosphorylated by GRK2 in a agonist-dependent manner. Phosphorylation at Tyr-169 requires receptor activation, is dependent on non-receptor protein tyrosine kinase Src and results in a decrease in agonist efficacy by reducing G-protein coupling efficiency. Phosphorylated on tyrosine residues; the phosphorylation is involved in agonist-induced G-protein-independent receptor down-regulation. Phosphorylation at Ser-378 is involved in G-protein-dependent but not beta-arrestin-dependent activation of the ERK pathway. In terms of processing, ubiquitinated. A basal ubiquitination seems not to be related to degradation. Ubiquitination is increased upon formation of OPRM1:OPRD1 oligomers leading to proteasomal degradation; the ubiquitination is diminished by RTP4.

The protein resides in the cell membrane. The protein localises to the cell projection. It is found in the axon. Its subcellular location is the perikaryon. It localises to the dendrite. The protein resides in the endosome. Receptor for endogenous opioids such as beta-endorphin and endomorphin. Receptor for natural and synthetic opioids including morphine, heroin, DAMGO, fentanyl, etorphine, buprenorphin and methadone. Also activated by enkephalin peptides, such as Met-enkephalin or Met-enkephalin-Arg-Phe, with higher affinity for Met-enkephalin-Arg-Phe. Agonist binding to the receptor induces coupling to an inactive GDP-bound heterotrimeric G-protein complex and subsequent exchange of GDP for GTP in the G-protein alpha subunit leading to dissociation of the G-protein complex with the free GTP-bound G-protein alpha and the G-protein beta-gamma dimer activating downstream cellular effectors. The agonist- and cell type-specific activity is predominantly coupled to pertussis toxin-sensitive G(i) and G(o) G alpha proteins, GNAI1, GNAI2, GNAI3 and GNAO1, and to a lesser extent to pertussis toxin-insensitive G alpha proteins GNAZ and GNA15. They mediate an array of downstream cellular responses, including inhibition of adenylate cyclase activity and both N-type and L-type calcium channels, activation of inward rectifying potassium channels, mitogen-activated protein kinase (MAPK), phospholipase C (PLC), phosphoinositide/protein kinase (PKC), phosphoinositide 3-kinase (PI3K) and regulation of NF-kappa-B. Also couples to adenylate cyclase stimulatory G alpha proteins. The selective temporal coupling to G-proteins and subsequent signaling can be regulated by RGSZ proteins, such as RGS9, RGS17 and RGS4. Phosphorylation by members of the GPRK subfamily of Ser/Thr protein kinases and association with beta-arrestins is involved in short-term receptor desensitization. Beta-arrestins associate with the GPRK-phosphorylated receptor and uncouple it from the G-protein thus terminating signal transduction. The phosphorylated receptor is internalized through endocytosis via clathrin-coated pits which involves beta-arrestins. The activation of the ERK pathway occurs either in a G-protein-dependent or a beta-arrestin-dependent manner and is regulated by agonist-specific receptor phosphorylation. Acts as a class A G-protein coupled receptor (GPCR) which dissociates from beta-arrestin at or near the plasma membrane and undergoes rapid recycling. Receptor down-regulation pathways are varying with the agonist and occur dependent or independent of G-protein coupling. Endogenous ligands induce rapid desensitization, endocytosis and recycling. Heterooligomerization with other GPCRs can modulate agonist binding, signaling and trafficking properties. Involved in neurogenesis. In Bos taurus (Bovine), this protein is Mu-type opioid receptor (OPRM1).